Here is a 607-residue protein sequence, read N- to C-terminus: Serum albumin (607 aa).

The N-terminal stretch at 1 to 16 (MKWTILTALLIISAES) is a signal peptide. Residues 17–20 (KNLY) constitute a propeptide that is removed on maturation. Albumin domains lie at 19–209 (LYKR…TQLK), 210–401 (KALH…HVLA), and 403–600 (AIKE…ILIE). His27 lines the Cu cation pocket. Disulfide bonds link Cys77-Cys86, Cys99-Cys115, Cys114-Cys125, Cys147-Cys192, Cys191-Cys200, Cys223-Cys269, Cys268-Cys276, Cys288-Cys302, Cys301-Cys312, Cys339-Cys384, Cys383-Cys392, Cys415-Cys461, Cys460-Cys471, Cys484-Cys500, Cys499-Cys510, Cys537-Cys582, and Cys581-Cys590. Zn(2+)-binding residues include His270 and Asp272. 2 residues coordinate Ca(2+): Asp272 and Glu275.

This sequence belongs to the ALB/AFP/VDB family. Plasma. In the skin, widely distributed around the membranes of epithelial layer cells and within the stratum spongiosum of the dermis (at protein level).

The protein localises to the secreted. Functionally, serum albumin, the main protein of plasma, has a good binding capacity for water, Ca(2+), Na(+), K(+), fatty acids, hormones, bilirubin and drugs. Its main function is the regulation of the colloidal osmotic pressure of blood. Potent inhibitor of trypsin but has no inhibitory effect on thrombin, chymotrypsin, elastase and subtilisin. The polypeptide is Serum albumin (Bombina maxima (Giant fire-bellied toad)).